The following is a 409-amino-acid chain: 3-isopropylmalate dehydrogenase 1, chloroplastic (409 aa).

The transit peptide at 1–37 directs the protein to the chloroplast; sequence MAAFLQTNISLNAIKIVPGKYSSLTDHQFRAPYRIRC. A Phosphoserine modification is found at serine 74. 118-133 contacts NAD(+); it reads IGGYKWDKNEKHLRPE. Substrate is bound by residues arginine 140, arginine 150, and arginine 178. An NAD(+)-binding site is contributed by asparagine 238. Residue aspartate 268 participates in substrate binding. Aspartate 268 is a Mg(2+) binding site. Asparagine 269 contributes to the NAD(+) binding site. Residues aspartate 292 and aspartate 296 each contribute to the Mg(2+) site. 322 to 338 serves as a coordination point for NAD(+); it reads EPIHGSAPDIAGQDKAN.

This sequence belongs to the isocitrate and isopropylmalate dehydrogenases family. As to quaternary structure, homodimer. It depends on Mg(2+) as a cofactor. The cofactor is Mn(2+). As to expression, highly expressed in seedlings, leaves, stems and roots and, to a lower extent, in flowers, pollen and siliques.

It localises to the plastid. The protein resides in the chloroplast stroma. It carries out the reaction (2R,3S)-3-isopropylmalate + NAD(+) = 4-methyl-2-oxopentanoate + CO2 + NADH. It functions in the pathway amino-acid biosynthesis; L-leucine biosynthesis; L-leucine from 3-methyl-2-oxobutanoate: step 3/4. The protein operates within secondary metabolite biosynthesis. Its activity is regulated as follows. Regulated by a thiol-based redox modification; oxidation by CuCl(2) leads to a decreased activity. Involved in both glucosinolate and leucine biosynthesis; catalyzes the oxidative decarboxylation step in both leucine biosynthesis (primary metabolism) and methionine chain elongation of glucosinolates (specialized metabolism). Catalyzes the oxidation of 3-carboxy-2-hydroxy-4-methylpentanoate (3-isopropylmalate, 3-IPM) to 3-carboxy-4-methyl-2-oxopentanoate. The product decarboxylates to 4-methyl-2 oxopentanoate. Required during pollen development and involved in embryo sac development. More active on 3-isopropylmalate and NAD(+) than towards D-malate. The chain is 3-isopropylmalate dehydrogenase 1, chloroplastic from Arabidopsis thaliana (Mouse-ear cress).